Here is a 1371-residue protein sequence, read N- to C-terminus: Soluble scavenger receptor cysteine-rich domain-containing protein SSC5D (1371 aa).

Positions 1-16 are cleaved as a signal peptide; the sequence is MRGLACLLAMLVGIQA. Residues 20–120 enclose the SRCR 1 domain; it reads LRLADGPHGC…HEEDAGVVCV (101 aa). Cystine bridges form between C45-C109, C58-C119, and C89-C99. Low complexity predominate over residues 143–154; the sequence is LSGELSPSSEEP. Positions 143–200 are disordered; the sequence is LSGELSPSSEEPPITHAPQPAASSQNGPRKKNPRPPKQTKSTRAPVLTNGAPHQERLR. SRCR domains follow at residues 199-299 and 305-405; these read LRLV…LVCT and IRLA…AVCD. 6 disulfides stabilise this stretch: C224–C288, C237–C298, C268–C278, C330–C394, C343–C404, and C374–C384. 2 N-linked (GlcNAc...) asparagine glycosylation sites follow: N377 and N422. The interval 431-466 is disordered; the sequence is TSVGQMPGPAGPWPPSASPTAPPEPGPEAGSPQLRL. Residues 439–456 show a composition bias toward pro residues; that stretch reads PAGPWPPSASPTAPPEPG. Residues 464–565 form the SRCR 4 domain; sequence LRLVAGPSRC…HNEDVGVTCT (102 aa). 3 disulfide bridges follow: C489-C554, C502-C564, and C534-C544. The segment at 592–756 is disordered; the sequence is WLPGELTTKP…AGVPVPSGPF (165 aa). Positions 599–611 are enriched in polar residues; sequence TKPSASLTSSVPQ. Residues 622–633 show a composition bias toward basic residues; it reads KSTKKWVTKNAR. Residues 653-663 show a composition bias toward polar residues; it reads TPTSLHPTART. Residues 665 to 676 are compositionally biased toward basic and acidic residues; it reads ELPKRLTTEAPH. A compositionally biased stretch (polar residues) spans 698–740; the sequence is PVVSQSTQGPQEVTSEATTTENPQTSLEPSGENTEGSLESSQD. The segment covering 741 to 755 has biased composition (low complexity); sequence PATTPTAGVPVPSGP. Residues 758–858 form the SRCR 5 domain; sequence VRLADGPNRC…HEEDVVLTCT (101 aa). 3 cysteine pairs are disulfide-bonded: C783–C847, C796–C857, and C827–C837. Disordered regions lie at residues 888–1270 and 1351–1371; these read RPGH…PFGP and STPV…RGDV. The span at 894 to 912 shows a compositional bias: polar residues; sequence SWATTTNTEVPSPATQNLP. 3 stretches are compositionally biased toward low complexity: residues 936 to 957, 981 to 1004, and 1018 to 1035; these read KGTP…KSPG, PTSA…RQTS, and GTSS…LPSP. 2 stretches are compositionally biased toward polar residues: residues 1039–1086 and 1102–1148; these read ALST…TSEL and SSDS…NPQQ. N1044 and N1131 each carry an N-linked (GlcNAc...) asparagine glycan. Pro residues predominate over residues 1149–1163; sequence PRSPHPATSPQPPTN. The segment covering 1164 to 1189 has biased composition (polar residues); it reads THPSSTPATPTESLPSSRKTELSSPT. Over residues 1218-1230 the composition is skewed to low complexity; it reads ASESGPSSPSPAS. A compositionally biased stretch (polar residues) spans 1244–1261; that stretch reads RSQTLHSASDHLTQGPTP.

As to quaternary structure, interacts with LGALS1 and laminin. Post-translationally, partially N- and O-glycosylated. Detected throughout the gastrointestinal and genitourinary tracts, in serosal salivary gland, the exocrine part of pancreas and testis, as well as in a few tubular structures in kidney. Not detected in lung and heart (at protein level). Strongly expressed in testis, kidney and pancreas, with lower levels detected in bone marrow, spleen, lung, liver, colon, stomach and skeletal muscle. Very low levels or no expression detected in thymus, esophagus, jejunum, ileum, duodenum, ovary, uterus, heart, trachea, brain, cerebellum and bladder.

Its subcellular location is the secreted. It localises to the cytoplasm. In terms of biological role, binds to extracellular matrix proteins. Binds to pathogen-associated molecular patterns (PAMPs) present on the cell walls of Gram-positive and Gram-negative bacteria and fungi, behaving as a pattern recognition receptor (PRR). Induces bacterial and fungal aggregation and subsequent inhibition of PAMP-induced cytokine release. Does not possess intrinsic bactericidal activity. May play a role in the innate defense and homeostasis of certain epithelial surfaces. This Mus musculus (Mouse) protein is Soluble scavenger receptor cysteine-rich domain-containing protein SSC5D (Ssc5d).